Consider the following 440-residue polypeptide: Proton extrusion protein PxcA (440 aa).

The next 4 membrane-spanning stretches (helical) occupy residues 222 to 242 (FVLT…TFFL), 316 to 336 (NAIA…LVLV), 352 to 374 (IVYG…MFVG), and 400 to 420 (FNFL…KYWI).

This sequence belongs to the CemA family.

The protein localises to the cell inner membrane. In terms of biological role, required for H(+) efflux immediately after light irradiation to form a rapid H(+) concentration gradient across the thylakoid membranes. Together with PxcL, contributes to transient H(+) uptake following dark to light transition. Involved in light-induced Na(+)-dependent proton extrusion. Also seems to be involved in CO(2) transport. This is Proton extrusion protein PxcA from Synechocystis sp. (strain ATCC 27184 / PCC 6803 / Kazusa).